Reading from the N-terminus, the 248-residue chain is Acetoacetyl-CoA reductase (248 aa).

Residues 14 to 16 (GGI), R42, and 90 to 94 (NAGIT) each bind NADP(+). Residues D96 and 149–152 (QFGQ) contribute to the substrate site. Residue Y155 is the Proton acceptor of the active site. Position 185 to 188 (185 to 188 (PGYT)) interacts with NADP(+). Substrate contacts are provided by residues 186-187 (GY) and R197.

This sequence belongs to the short-chain dehydrogenases/reductases (SDR) family.

Its subcellular location is the cytoplasm. The enzyme catalyses a (3R)-3-hydroxyacyl-CoA + NADP(+) = a 3-oxoacyl-CoA + NADPH + H(+). It participates in biopolymer metabolism; poly-(R)-3-hydroxybutanoate biosynthesis. The sequence is that of Acetoacetyl-CoA reductase (phaB) from Acinetobacter sp. (strain RA3849).